A 632-amino-acid chain; its full sequence is Probable extracellular metalloproteinase 2 (632 aa).

Positions 1-19 are cleaved as a signal peptide; it reads MHGLLLAGLAAALPLGVAG. Positions 20-244 are excised as a propeptide; it reads LPARQQSGLS…VHNVVDYVAS (225 aa). N-linked (GlcNAc...) asparagine glycans are attached at residues Asn81 and Asn270. His429 serves as a coordination point for Zn(2+). Residue Glu430 is part of the active site. His433 contributes to the Zn(2+) binding site.

It belongs to the peptidase M36 family. Requires Zn(2+) as cofactor.

The protein resides in the secreted. Functionally, secreted metalloproteinase probably acting as a virulence factor. This is Probable extracellular metalloproteinase 2 (MEP2) from Arthroderma benhamiae (strain ATCC MYA-4681 / CBS 112371) (Trichophyton mentagrophytes).